Reading from the N-terminus, the 183-residue chain is Threonylcarbamoyl-AMP synthase (183 aa).

The YrdC-like domain occupies 1-183; it reads MNREQIAEAL…LRTNQLFRQG (183 aa).

Belongs to the SUA5 family. TsaC subfamily.

The protein localises to the cytoplasm. It catalyses the reaction L-threonine + hydrogencarbonate + ATP = L-threonylcarbamoyladenylate + diphosphate + H2O. In terms of biological role, required for the formation of a threonylcarbamoyl group on adenosine at position 37 (t(6)A37) in tRNAs that read codons beginning with adenine. Catalyzes the conversion of L-threonine, HCO(3)(-)/CO(2) and ATP to give threonylcarbamoyl-AMP (TC-AMP) as the acyladenylate intermediate, with the release of diphosphate. This is Threonylcarbamoyl-AMP synthase from Haemophilus influenzae (strain 86-028NP).